The chain runs to 57 residues: Sec-independent protein translocase protein TatAy (57 aa).

The chain crosses the membrane as a helical span at residues M1–P21.

It belongs to the TatA/E family. In terms of assembly, forms a complex with TatCy. Two types of complexes exist: one composed of TatAy and TatCy, and another composed only of TatAy. Cytosolic TatA forms large complexes or aggregates.

It localises to the cell membrane. Its subcellular location is the cytoplasm. The protein localises to the cytosol. Part of the twin-arginine translocation (Tat) system that transports large folded proteins containing a characteristic twin-arginine motif in their signal peptide across membranes. TatA could form the protein-conducting channel of the Tat system. Required for YwbN secretion. This Bacillus subtilis (strain 168) protein is Sec-independent protein translocase protein TatAy.